The following is a 180-amino-acid chain: uncharacterized protein (180 aa).

A run of 6 helical transmembrane segments spans residues 4–24, 25–45, 57–77, 81–101, 124–144, and 156–176; these read KSNI…LSLF, IKNF…WLFI, NLLA…GIIY, FLDI…GILF, FLTL…LLIL, and IIRT…FYTF.

It localises to the cell membrane. This is an uncharacterized protein from Methanocaldococcus jannaschii (strain ATCC 43067 / DSM 2661 / JAL-1 / JCM 10045 / NBRC 100440) (Methanococcus jannaschii).